A 147-amino-acid chain; its full sequence is Hemoglobin subunit beta (147 aa).

N-acetylvaline is present on valine 2. In terms of domain architecture, Globin spans histidine 3 to histidine 147. Threonine 13 bears the Phosphothreonine mark. Serine 45 is subject to Phosphoserine. Residue lysine 60 is modified to N6-acetyllysine. Position 64 (histidine 64) interacts with heme b. Lysine 83 carries the N6-acetyllysine modification. Residue histidine 93 coordinates heme b. Cysteine 94 bears the S-nitrosocysteine mark. N6-acetyllysine is present on lysine 145.

Belongs to the globin family. In terms of assembly, heterotetramer of two alpha chains and two beta chains in adult hemoglobin A (HbA). Red blood cells.

Involved in oxygen transport from the lung to the various peripheral tissues. The polypeptide is Hemoglobin subunit beta (HBB) (Pan paniscus (Pygmy chimpanzee)).